Here is a 580-residue protein sequence, read N- to C-terminus: (3S,6E)-nerolidol synthase 1, chloroplastic (580 aa).

Residues 1–31 (MASSSWAFFKVFNPQIAPKSISHIGQSDLMQ) constitute a chloroplast transit peptide. Mg(2+)-binding residues include Asp334, Asp338, Asp478, Ser482, and Glu486. The short motif at 334–338 (DDIFD) is the DDXXD motif element.

It belongs to the terpene synthase family. Tpsg subfamily. The cofactor is Mg(2+). Mn(2+) serves as cofactor.

It is found in the plastid. Its subcellular location is the chloroplast. The catalysed reaction is (2E,6E)-farnesyl diphosphate + H2O = (3S,6E)-nerolidol + diphosphate. It functions in the pathway secondary metabolite biosynthesis; terpenoid biosynthesis. In terms of biological role, involved in monoterpene (C10) and sesquiterpene (C15) biosynthesis. Converts geranyl diphosphate (GPP) into S-linalool and farnesyl diphosphate (FPP) into (3S)-E-nerolidol. Probably not expressed in wild strawberry species. This Fragaria vesca (Woodland strawberry) protein is (3S,6E)-nerolidol synthase 1, chloroplastic.